The primary structure comprises 374 residues: Anhydro-N-acetylmuramic acid kinase (374 aa).

12 to 19 contributes to the ATP binding site; it reads GTSLDGVD.

It belongs to the anhydro-N-acetylmuramic acid kinase family.

It catalyses the reaction 1,6-anhydro-N-acetyl-beta-muramate + ATP + H2O = N-acetyl-D-muramate 6-phosphate + ADP + H(+). Its pathway is amino-sugar metabolism; 1,6-anhydro-N-acetylmuramate degradation. It participates in cell wall biogenesis; peptidoglycan recycling. Catalyzes the specific phosphorylation of 1,6-anhydro-N-acetylmuramic acid (anhMurNAc) with the simultaneous cleavage of the 1,6-anhydro ring, generating MurNAc-6-P. Is required for the utilization of anhMurNAc either imported from the medium or derived from its own cell wall murein, and thus plays a role in cell wall recycling. The chain is Anhydro-N-acetylmuramic acid kinase from Escherichia fergusonii (strain ATCC 35469 / DSM 13698 / CCUG 18766 / IAM 14443 / JCM 21226 / LMG 7866 / NBRC 102419 / NCTC 12128 / CDC 0568-73).